Consider the following 298-residue polypeptide: Estradiol 17-beta-dehydrogenase 11 (298 aa).

The first 21 residues, 1–21, serve as a signal peptide directing secretion; it reads MKYLLDLILLLPLLIVFCIES. 40 to 64 contacts NADP(+); that stretch reads LITGAGHGIGRLTAYEFAKLNTKLV. A substrate-binding site is contributed by Ser-172. Tyr-185 serves as the catalytic Proton acceptor.

This sequence belongs to the short-chain dehydrogenases/reductases (SDR) family. 17-beta-HSD 3 subfamily.

The protein resides in the endoplasmic reticulum. Its subcellular location is the lipid droplet. The catalysed reaction is 17beta-estradiol + NAD(+) = estrone + NADH + H(+). It carries out the reaction 17beta-estradiol + NADP(+) = estrone + NADPH + H(+). In terms of biological role, can convert androstan-3-alpha,17-beta-diol (3-alpha-diol) to androsterone in vitro, suggesting that it may participate in androgen metabolism during steroidogenesis. May act by metabolizing compounds that stimulate steroid synthesis and/or by generating metabolites that inhibit it. Has no activity toward DHEA (dehydroepiandrosterone), or A-dione (4-androste-3,17-dione), and only a slight activity toward testosterone to A-dione. The polypeptide is Estradiol 17-beta-dehydrogenase 11 (Hsd17b11) (Rattus norvegicus (Rat)).